Here is a 263-residue protein sequence, read N- to C-terminus: Small ribosomal subunit protein uS2 (263 aa).

Positions 228–263 are disordered; sequence QLEEPEADLADEDDNGMTTSDDGDAEALDIPDDSDA. Positions 230–263 are enriched in acidic residues; the sequence is EEPEADLADEDDNGMTTSDDGDAEALDIPDDSDA.

This sequence belongs to the universal ribosomal protein uS2 family.

The protein is Small ribosomal subunit protein uS2 of Thermosynechococcus vestitus (strain NIES-2133 / IAM M-273 / BP-1).